Here is an 873-residue protein sequence, read N- to C-terminus: Sine oculis-binding protein homolog (873 aa).

The span at 1–14 (MAEMEKEGRPPENK) shows a compositional bias: basic and acidic residues. The disordered stretch occupies residues 1–26 (MAEMEKEGRPPENKRSRKPAHPVKRE). FCS-type zinc fingers lie at residues 142-180 (DDVS…KCFA) and 216-256 (FKNN…KCLN). Disordered stretches follow at residues 307-338 (ARRK…SDTA), 413-485 (RGPP…GAPL), 550-608 (KPPS…NQAQ), 742-766 (STEG…ELAV), and 779-811 (SNCH…NPAD). Low complexity predominate over residues 312 to 338 (PSPASAAGQIQGPGPSASTTASPSDTA). Over residues 460–485 (IHPPTTPTMPGNPPGLLPPPPPGAPL) the composition is skewed to pro residues. Residues 554–570 (GFSSNGENFIPSNSSET) are compositionally biased toward polar residues. The span at 571–603 (PGGKPPNSSSSPRESKQGSSKPSDSSPSCSGQS) shows a compositional bias: low complexity. A compositionally biased stretch (basic and acidic residues) spans 783–793 (LEGDTGKKAGE).

The protein belongs to the SOBP family.

Its function is as follows. Implicated in development of the cochlea. This chain is Sine oculis-binding protein homolog, found in Gallus gallus (Chicken).